The primary structure comprises 538 residues: Cytochrome c-552 (538 aa).

The signal sequence occupies residues 1 to 55 (MKIYLRFVWILIIILNFLLNLFITTNGVIIVNAFKKSLIVAASFASLSLFNSATA). Histidine 133 is a binding site for heme c. The heme site is built by cysteine 161, cysteine 164, and lysine 165. Heme c is bound by residues cysteine 199, cysteine 202, histidine 203, cysteine 264, cysteine 267, and histidine 268. The Ca(2+) site is built by glutamate 270, tyrosine 271, lysine 316, and glutamine 318. Tyrosine 271 provides a ligand contact to substrate. Residue histidine 319 participates in substrate binding. The heme c site is built by histidine 330, cysteine 337, cysteine 340, histidine 341, histidine 356, cysteine 369, cysteine 372, histidine 373, and histidine 448.

Belongs to the cytochrome c-552 family. Ca(2+) serves as cofactor. Requires heme c as cofactor.

Its subcellular location is the periplasm. The catalysed reaction is 6 Fe(III)-[cytochrome c] + NH4(+) + 2 H2O = 6 Fe(II)-[cytochrome c] + nitrite + 8 H(+). It functions in the pathway nitrogen metabolism; nitrate reduction (assimilation). Its function is as follows. Catalyzes the reduction of nitrite to ammonia, consuming six electrons in the process. This chain is Cytochrome c-552, found in Haemophilus influenzae (strain ATCC 51907 / DSM 11121 / KW20 / Rd).